The chain runs to 147 residues: Hemoglobin subunit gamma-1 (147 aa).

An N-acetylglycine modification is found at Gly2. The Globin domain occupies 3 to 147 (HFTEEDKATI…VASALSSRYH (145 aa)). Thr13 is subject to Phosphothreonine. Residues Ser45, Ser51, and Ser53 each carry the phosphoserine modification. Position 60 is an N6-acetyllysine (Lys60). His64 contacts heme b. Position 83 is an N6-acetyllysine (Lys83). His93 is a binding site for heme b. Cys94 bears the S-nitrosocysteine mark. Ser140 carries the phosphoserine modification.

Belongs to the globin family. In terms of assembly, heterotetramer of two alpha chains and two gamma chains in fetal hemoglobin (Hb F). In terms of tissue distribution, red blood cells.

Gamma chains make up the fetal hemoglobin F, in combination with alpha chains. The polypeptide is Hemoglobin subunit gamma-1 (HBG1) (Gorilla gorilla gorilla (Western lowland gorilla)).